The chain runs to 220 residues: MMQELKILNEKRAEIYWWLSSLFFKELSEQDIARYHSAEVRTFLSGLADEQSLNREVKHLVEALNRLQDRQDAQLELAADFCDLFLKSDRDSALPYASVYADQGLLNGKPAQQMRELLSAHGVKVEQNLNEPEDHLAIQLDFLAHLAISANQIEHSAQLSLALQAQSDFISQHLLTWLPAFAERCTQFDAFGLYSAAARLALAFIQQDKHCLDELIQETH.

This sequence belongs to the TorD/DmsD family. TorD subfamily.

Its subcellular location is the cytoplasm. Its function is as follows. Involved in the biogenesis of TorA. Acts on TorA before the insertion of the molybdenum cofactor and, as a result, probably favors a conformation of the apoenzyme that is competent for acquiring the cofactor. The sequence is that of Chaperone protein TorD from Vibrio cholerae serotype O1 (strain M66-2).